Consider the following 452-residue polypeptide: Lamina-associated polypeptide 2, isoform beta (452 aa).

The nucleoplasmic stretch occupies residues 1–409 (MPEFLEDPSV…KSEKTKKGRS (409 aa)). The LEM-like domain maps to 5–48 (LEDPSVLTKDKLKSELVANNVTLPAGEQRKDVYVQLYLQHLTAR). Disordered stretches follow at residues 48 to 113 (RNRP…DVTE) and 149 to 264 (REQG…VEPS). The linker stretch occupies residues 49–107 (NRPPLAAGANSKGPPDFSSDEEREPTPVLGSGASVGRGRGAVGRKATKKTDKPRPEDKD). Phosphoserine occurs at positions 66 and 67. Phosphothreonine is present on Thr-74. Ser-82 bears the Phosphoserine mark. Arg-85 and Arg-87 each carry omega-N-methylarginine. The span at 96–105 (KKTDKPRPED) shows a compositional bias: basic and acidic residues. The 45-residue stretch at 108–152 (DLDVTELSNEELLEQLVRYGVNPGPIVGTTRKLYEKKLLKLREQG) folds into the LEM domain. Residues 137–242 (TRKLYEKKLL…TSGSSKGGPL (106 aa)) form an NAKAP95-binding N region. Positions 154–177 (ESRSSTPLPTVSSSAENTRQNGSN) are enriched in polar residues. A phosphoserine mark is found at Ser-155 and Ser-158. A Phosphothreonine modification is found at Thr-159. Phosphoserine occurs at positions 165, 167, 176, 179, and 183. Residues 178–202 (DSDRYSDNDEDSKIELKLEKREPLK) are compositionally biased toward basic and acidic residues. Lys-206 carries the post-translational modification N6-acetyllysine. The tract at residues 298–370 (TGNFKHASSI…SCRRPIKGAA (73 aa)) is binds lamins B. Residues 299 to 373 (GNFKHASSIL…RPIKGAAGRP (75 aa)) are NAKAP95-binding C. 3 positions are modified to phosphoserine: Ser-305, Ser-306, and Ser-361. At Lys-388 the chain carries N6-acetyllysine. Residues 410–430 (VPMWIKMLLFALVAGFLFLVY) traverse the membrane as a helical; Signal-anchor for type II membrane protein segment. The Lumenal segment spans residues 431–452 (QAMETNQGNPFTNFLQDTKISN).

This sequence belongs to the LEM family. As to quaternary structure, interacts with LMNB1, LMNB2, BANF1, AKAP8L, GMCL and chromosomes. In terms of processing, mitosis-specific phosphorylation specifically abolishes its binding to lamin B and chromosomes.

It localises to the nucleus inner membrane. The protein resides in the chromosome. Binds directly to lamin B1 and chromosomes in a mitotic phosphorylation-regulated manner. May play an important role in nuclear envelope reassembly at the end of mitosis and/or anchoring of the nuclear lamina and interphase chromosomes to the nuclear envelope. In Rattus norvegicus (Rat), this protein is Lamina-associated polypeptide 2, isoform beta (Tmpo).